The primary structure comprises 1342 residues: DNA-directed RNA polymerase subunit beta (1342 aa).

It belongs to the RNA polymerase beta chain family. In terms of assembly, the RNAP catalytic core consists of 2 alpha, 1 beta, 1 beta' and 1 omega subunit. When a sigma factor is associated with the core the holoenzyme is formed, which can initiate transcription.

It catalyses the reaction RNA(n) + a ribonucleoside 5'-triphosphate = RNA(n+1) + diphosphate. Functionally, DNA-dependent RNA polymerase catalyzes the transcription of DNA into RNA using the four ribonucleoside triphosphates as substrates. In Buchnera aphidicola subsp. Schizaphis graminum (strain Sg), this protein is DNA-directed RNA polymerase subunit beta.